A 527-amino-acid polypeptide reads, in one-letter code: MGADNELSEFEKQRLANIAERDALLKKLTLDAQSAGLFPPKSARSSPGGLTKPKKKPAPKKVKKEDEDLVPRRMSSRLRGLAADSEVAKRKADEQYEAAQQAERAKRVRKSDAFSFSEMLVSGQKLSGDSLIGVDVVTKGVAMPYQRTFGDDDIKKTTDKELKALREEMSGLRLWEAWEPNRIKLTPERIYTMTFHPSEAKPLIFAGDKMGNLGVLDASQEKPISAVKQEDDEDAEDDDPDPVLTTLKPHTRTISSMHVHPSKPTHLYSASYDSSIRELDLEKTTSVEKYAPESTSDDIPISGIDMAPDDPNTLYWTTLDGAFGRYDTRASRRSAVATWQLSEKKIGGFSLFPTHPHFFATASLDRTMRLWDIRKLSHDEPVPVGEHVSRLSVSHAAFNSAGQIATSSYDDTLKIYDFGSKGIAAWKPGHTLSDAEMKPDTIVRHNCQTGRWVTILRPQWQANPQSPIQRFCIGNMNRFVDVYSSSGDQLAQLGGDGITAVPAVAVFHRSTNWIAGGTASGKICLWM.

Positions 35–90 are disordered; it reads AGLFPPKSARSSPGGLTKPKKKPAPKKVKKEDEDLVPRRMSSRLRGLAADSEVAKR. Residues 52 to 62 are compositionally biased toward basic residues; sequence KPKKKPAPKKV. 7 WD repeats span residues 185 to 226, 249 to 289, 296 to 336, 341 to 381, 388 to 427, 450 to 493, and 496 to 527; these read LTPE…PISA, PHTR…SVEK, SDDI…RSAV, LSEK…HDEP, VSRL…AAWK, GRWV…LAQL, and DGIT…CLWM. The interval 284–303 is disordered; that stretch reads TTSVEKYAPESTSDDIPISG.

Belongs to the WD repeat DDB2/WDR76 family.

Its function is as follows. DNA-binding protein that binds to both single- and double-stranded DNA. Binds preferentially to UV-damaged DNA. May be involved in DNA-metabolic processes. This is DNA damage-binding protein cmr1 from Neosartorya fischeri (strain ATCC 1020 / DSM 3700 / CBS 544.65 / FGSC A1164 / JCM 1740 / NRRL 181 / WB 181) (Aspergillus fischerianus).